The sequence spans 442 residues: Putative FNIP repeat-containing protein L170 (442 aa).

FNIP repeat units follow at residues 213–252 (FNSS…IGRG), 253–294 (FNSE…LGCF), and 295–348 (FNQS…FGMY).

The sequence is that of Putative FNIP repeat-containing protein L170 from Acanthamoeba polyphaga mimivirus (APMV).